The chain runs to 454 residues: Ornithine aminotransferase (454 aa).

Position 280 is an N6-(pyridoxal phosphate)lysine (K280).

This sequence belongs to the class-III pyridoxal-phosphate-dependent aminotransferase family. Pyridoxal 5'-phosphate serves as cofactor.

The protein resides in the cytoplasm. It carries out the reaction a 2-oxocarboxylate + L-ornithine = L-glutamate 5-semialdehyde + an L-alpha-amino acid. Its pathway is amino-acid biosynthesis; L-proline biosynthesis; L-glutamate 5-semialdehyde from L-ornithine: step 1/1. This chain is Ornithine aminotransferase (otaA), found in Emericella nidulans (strain FGSC A4 / ATCC 38163 / CBS 112.46 / NRRL 194 / M139) (Aspergillus nidulans).